Consider the following 310-residue polypeptide: Syntaxin-81 (310 aa).

At Met-1 to Arg-289 the chain is on the cytoplasmic side. Positions Arg-77–Asn-114 form a coiled coil. Residues Thr-290 to Ser-310 form a helical; Anchor for type IV membrane protein membrane-spanning segment.

This sequence belongs to the syntaxin family. Part of the t-SNARE complex. Interacts with MAG2.

The protein localises to the membrane. In terms of biological role, vesicle trafficking protein that functions in the secretory pathway. The chain is Syntaxin-81 (SYP81) from Arabidopsis thaliana (Mouse-ear cress).